The sequence spans 478 residues: Protein nucleotidyltransferase YdiU (478 aa).

ATP-binding residues include Gly84, Gly86, Arg87, Lys107, Asp119, Gly120, Arg170, and Arg177. Asp246 (proton acceptor) is an active-site residue. Positions 247 and 256 each coordinate Mg(2+). Asp256 contributes to the ATP binding site.

The protein belongs to the SELO family. Requires Mg(2+) as cofactor. It depends on Mn(2+) as a cofactor.

It carries out the reaction L-seryl-[protein] + ATP = 3-O-(5'-adenylyl)-L-seryl-[protein] + diphosphate. The catalysed reaction is L-threonyl-[protein] + ATP = 3-O-(5'-adenylyl)-L-threonyl-[protein] + diphosphate. It catalyses the reaction L-tyrosyl-[protein] + ATP = O-(5'-adenylyl)-L-tyrosyl-[protein] + diphosphate. The enzyme catalyses L-histidyl-[protein] + UTP = N(tele)-(5'-uridylyl)-L-histidyl-[protein] + diphosphate. It carries out the reaction L-seryl-[protein] + UTP = O-(5'-uridylyl)-L-seryl-[protein] + diphosphate. The catalysed reaction is L-tyrosyl-[protein] + UTP = O-(5'-uridylyl)-L-tyrosyl-[protein] + diphosphate. In terms of biological role, nucleotidyltransferase involved in the post-translational modification of proteins. It can catalyze the addition of adenosine monophosphate (AMP) or uridine monophosphate (UMP) to a protein, resulting in modifications known as AMPylation and UMPylation. The chain is Protein nucleotidyltransferase YdiU from Escherichia coli (strain ATCC 8739 / DSM 1576 / NBRC 3972 / NCIMB 8545 / WDCM 00012 / Crooks).